The sequence spans 786 residues: Endonuclease MutS2 (786 aa).

335–342 (GPNTGGKT) serves as a coordination point for ATP. A Smr domain is found at 711 to 786 (LDLRGERFEN…GLGVTVVELK (76 aa)).

This sequence belongs to the DNA mismatch repair MutS family. MutS2 subfamily. Homodimer. Binds to stalled ribosomes, contacting rRNA.

Endonuclease that is involved in the suppression of homologous recombination and thus may have a key role in the control of bacterial genetic diversity. Its function is as follows. Acts as a ribosome collision sensor, splitting the ribosome into its 2 subunits. Detects stalled/collided 70S ribosomes which it binds and splits by an ATP-hydrolysis driven conformational change. Acts upstream of the ribosome quality control system (RQC), a ribosome-associated complex that mediates the extraction of incompletely synthesized nascent chains from stalled ribosomes and their subsequent degradation. Probably generates substrates for RQC. The chain is Endonuclease MutS2 from Bacillus cereus (strain ATCC 10987 / NRS 248).